We begin with the raw amino-acid sequence, 179 residues long: Large ribosomal subunit protein uL5 (179 aa).

Belongs to the universal ribosomal protein uL5 family. In terms of assembly, part of the 50S ribosomal subunit; part of the 5S rRNA/L5/L18/L25 subcomplex. Contacts the 5S rRNA and the P site tRNA. Forms a bridge to the 30S subunit in the 70S ribosome.

Functionally, this is one of the proteins that bind and probably mediate the attachment of the 5S RNA into the large ribosomal subunit, where it forms part of the central protuberance. In the 70S ribosome it contacts protein S13 of the 30S subunit (bridge B1b), connecting the 2 subunits; this bridge is implicated in subunit movement. Contacts the P site tRNA; the 5S rRNA and some of its associated proteins might help stabilize positioning of ribosome-bound tRNAs. The polypeptide is Large ribosomal subunit protein uL5 (Geotalea uraniireducens (strain Rf4) (Geobacter uraniireducens)).